Here is an 86-residue protein sequence, read N- to C-terminus: Large ribosomal subunit protein bL28 (86 aa).

It belongs to the bacterial ribosomal protein bL28 family.

The protein is Large ribosomal subunit protein bL28 of Bacteroides thetaiotaomicron (strain ATCC 29148 / DSM 2079 / JCM 5827 / CCUG 10774 / NCTC 10582 / VPI-5482 / E50).